A 568-amino-acid polypeptide reads, in one-letter code: Nucleolar protein 58 (568 aa).

The Nop domain maps to 293–417 (IAPNLTALVG…LESRLRALEH (125 aa)). A disordered region spans residues 430–568 (ANGQQGRQQP…KKKKKKKKDE (139 aa)). Basic and acidic residues predominate over residues 471-482 (EEVKEEKDEKKD). A compositionally biased stretch (basic residues) spans 522–533 (RKEAKKAAKAAK). Residues 534 to 544 (KAAEESGDGDK) are compositionally biased toward basic and acidic residues.

It belongs to the NOP5/NOP56 family.

It is found in the nucleus. The protein localises to the nucleolus. Required for pre-18S rRNA processing. May bind microtubules. In Cryptococcus neoformans var. neoformans serotype D (strain JEC21 / ATCC MYA-565) (Filobasidiella neoformans), this protein is Nucleolar protein 58 (NOP58).